Here is a 526-residue protein sequence, read N- to C-terminus: MAVPDWKHAADVVVIGTGVAGLAAALAAHRAGRNVVVLTKADQRRGETATHYAQGGIAVVLPGSDDSVDAHASDTLAAGAGMCNLDTVYSIVAEGYHAVTELVGYGARFDESIPGRWAVTCEGGHSRRRIVHAGGDATGAEVQRALDHAADVLDIRTSHLALRVLHDGTVVNGVSVLNPNGWGIVSAPSVILASGGLGHLYGATTNPEGSTGDGIALALWAGVAVSDLEFIQFHPTMLFAAGTGTGGRRPLVTEAIRGEGAILLDSKGNSVTSGVHPLGDLAPRDVVAAAIDARLKATGDSCVYLDARGIDGFASRFPTVTAACRTVGIDPAREPIPVVPGAHYSCGGIVTDAYGQTELAGLFAAGEVARTGMHGANRLASNSLLEGLVVGGRAGRAAAAHAAAAGRAYVSKLEPVTHHALKRRELQRVMSRDAAVMRNAAGLQRLSDTLAEAPIRHVTGRRDFEDVALTLTARAVAAAALARNESRGCHHCTEYPDTAPEHARSTVIRLADDQNLVRAEALATVG.

FAD-binding positions include 17–20 (TGVA), lysine 40, 49–56 (ATHYAQGG), and aspartate 213. Arginine 284 acts as the Proton donor/acceptor in catalysis. FAD-binding positions include glutamate 367 and 383–384 (SL).

The protein belongs to the FAD-dependent oxidoreductase 2 family. NadB subfamily. FAD is required as a cofactor.

It localises to the cytoplasm. It carries out the reaction L-aspartate + O2 = iminosuccinate + H2O2. Its pathway is cofactor biosynthesis; NAD(+) biosynthesis; iminoaspartate from L-aspartate (oxidase route): step 1/1. In terms of biological role, catalyzes the oxidation of L-aspartate to iminoaspartate, the first step in the de novo biosynthesis of NAD(+). The polypeptide is L-aspartate oxidase (nadB) (Mycobacterium leprae (strain TN)).